The primary structure comprises 796 residues: Leucine--tRNA ligase (796 aa).

Positions 40–51 (PYPSASGLHVGH) match the 'HIGH' region motif. Residues 569 to 573 (KMSKS) carry the 'KMSKS' region motif. Lysine 572 serves as a coordination point for ATP.

This sequence belongs to the class-I aminoacyl-tRNA synthetase family.

It localises to the cytoplasm. It carries out the reaction tRNA(Leu) + L-leucine + ATP = L-leucyl-tRNA(Leu) + AMP + diphosphate. The chain is Leucine--tRNA ligase from Bdellovibrio bacteriovorus (strain ATCC 15356 / DSM 50701 / NCIMB 9529 / HD100).